The sequence spans 641 residues: SH2 domain-containing protein A (641 aa).

The interval 355–384 (VNGNGTSMEWRPQNHEEDNSSTDSENTEMR) is disordered. Positions 547–641 (WIEGFVTKEE…SRLGRIIRGI (95 aa)) constitute an SH2 domain.

Phosphorylated on tyrosine residues. Expressed in roots, leaves, stems and flowers.

This Arabidopsis thaliana (Mouse-ear cress) protein is SH2 domain-containing protein A.